The sequence spans 318 residues: Trans-prenyltransferase (318 aa).

Residues 1 to 21 traverse the membrane as a helical segment; that stretch reads MLHLIYISIIVVLIIILISYT. Residues lysine 85, arginine 88, and histidine 122 each contribute to the isopentenyl diphosphate site. 2 residues coordinate Mg(2+): aspartate 129 and aspartate 135. Arginine 140 is a dimethylallyl diphosphate binding site. Isopentenyl diphosphate is bound at residue arginine 141. Dimethylallyl diphosphate is bound by residues lysine 216, threonine 217, and glutamine 254.

It belongs to the FPP/GGPP synthase family. Asfivirus trans-prenyltransferase subfamily. It depends on Mg(2+) as a cofactor.

Its subcellular location is the host endoplasmic reticulum. The protein localises to the host membrane. It carries out the reaction isopentenyl diphosphate + dimethylallyl diphosphate = (2E)-geranyl diphosphate + diphosphate. The enzyme catalyses isopentenyl diphosphate + (2E)-geranyl diphosphate = (2E,6E)-farnesyl diphosphate + diphosphate. It catalyses the reaction isopentenyl diphosphate + (2E,6E)-farnesyl diphosphate = (2E,6E,10E)-geranylgeranyl diphosphate + diphosphate. The catalysed reaction is isopentenyl diphosphate + (2E,6E,10E)-geranylgeranyl diphosphate = (2E,6E,10E,14E)-geranylfarnesyl diphosphate + diphosphate. It participates in isoprenoid biosynthesis; farnesyl diphosphate biosynthesis; farnesyl diphosphate from geranyl diphosphate and isopentenyl diphosphate: step 1/1. It functions in the pathway isoprenoid biosynthesis; geranyl diphosphate biosynthesis; geranyl diphosphate from dimethylallyl diphosphate and isopentenyl diphosphate: step 1/1. Its pathway is isoprenoid biosynthesis; geranylgeranyl diphosphate biosynthesis; geranylgeranyl diphosphate from farnesyl diphosphate and isopentenyl diphosphate: step 1/1. Trans-prenyltransferase that catalyzes the sequential condensation of isopentenyl diphosphate (IPP) with different allylic diphosphates, such as dimethylallyl diphosphate (DMAPP), geranyl diphosphate (GPP), farnesyl diphosphate (FPP) and geranylgeranyl diphosphate (GGPP), farnesyl diphosphate being the best allylic substrate. This is Trans-prenyltransferase from African swine fever virus (isolate Tick/Malawi/Lil 20-1/1983) (ASFV).